The following is a 412-amino-acid chain: MNNSRVEGSSGRAARKLRFALMGPAFIAAIGYIDPGNFATNIQAGASFGYKLLWVVVWANLMAMLIQVLSAKLGIATGKNLAEQIRDHYPRPVVWFYWVQAEIIAMATDLAEFIGAAIGFKLILGVSLLQGAVLTGIATFLILMLQRRGQKPLELVIGGLLLFVAAAYIVELVFSQPNLVQLSKGMAIPSLPTSEAVFLAAGVLGATIMPHVIYLHSSLTQNAHDGTRQERYSATKWDVGIAMTIAGFVNLAMMATAAAAFHFNGHTGVADLDQAYLTLEPLLSHAAATIFGLSLVAAGLSSTVVGTLAGQVVMQGFVRFHIPLWVRRSVTMMPSFIVILMGLDPTRILVMSQVLLSFGIALALVPLLIFTGNKSLMGDLVNTTLVKRIGWMIVVLVVALNLWLLIGTLLGL.

Helical transmembrane passes span 19–39, 46–66, 94–114, 122–142, 155–175, 196–216, 241–261, 290–310, 329–349, 350–370, and 389–409; these read FALM…GNFA, ASFG…AMLI, VWFY…AEFI, LILG…TFLI, LVIG…LVFS, AVFL…IYLH, IAMT…AAAF, IFGL…TLAG, SVTM…TRIL, VMSQ…LLIF, and IGWM…IGTL.

This sequence belongs to the NRAMP family.

It is found in the cell inner membrane. Functionally, h(+)-stimulated, divalent metal cation uptake system. The polypeptide is Divalent metal cation transporter MntH (Enterobacter sp. (strain 638)).